Consider the following 207-residue polypeptide: dITP/XTP pyrophosphatase (207 aa).

11-16 (TGNPGK) contributes to the substrate binding site. The Proton acceptor role is filled by D72. Residue D72 coordinates Mg(2+). Residues S73, 154 to 157 (FGYD), K177, and 182 to 183 (HR) contribute to the substrate site.

The protein belongs to the HAM1 NTPase family. Homodimer. Mg(2+) serves as cofactor.

It catalyses the reaction XTP + H2O = XMP + diphosphate + H(+). The enzyme catalyses dITP + H2O = dIMP + diphosphate + H(+). It carries out the reaction ITP + H2O = IMP + diphosphate + H(+). Functionally, pyrophosphatase that catalyzes the hydrolysis of nucleoside triphosphates to their monophosphate derivatives, with a high preference for the non-canonical purine nucleotides XTP (xanthosine triphosphate), dITP (deoxyinosine triphosphate) and ITP. Seems to function as a house-cleaning enzyme that removes non-canonical purine nucleotides from the nucleotide pool, thus preventing their incorporation into DNA/RNA and avoiding chromosomal lesions. The protein is dITP/XTP pyrophosphatase of Thermus thermophilus (strain ATCC BAA-163 / DSM 7039 / HB27).